We begin with the raw amino-acid sequence, 135 residues long: Small ribosomal subunit protein bS16m (135 aa).

The transit peptide at 1–34 (MVQLTTVLCKAYRGGHLTIRLALGGCTNRPFYRI) directs the protein to the mitochondrion. Residue Thr-130 is modified to Phosphothreonine.

This sequence belongs to the bacterial ribosomal protein bS16 family. As to quaternary structure, component of the mitochondrial ribosome small subunit (28S) which comprises a 12S rRNA and about 30 distinct proteins.

Its subcellular location is the mitochondrion. The protein is Small ribosomal subunit protein bS16m (MRPS16) of Bos taurus (Bovine).